The following is a 1196-amino-acid chain: DNA-directed RNA polymerase subunit beta (1196 aa).

It belongs to the RNA polymerase beta chain family. As to quaternary structure, the RNAP catalytic core consists of 2 alpha, 1 beta, 1 beta' and 1 omega subunit. When a sigma factor is associated with the core the holoenzyme is formed, which can initiate transcription.

The catalysed reaction is RNA(n) + a ribonucleoside 5'-triphosphate = RNA(n+1) + diphosphate. Its function is as follows. DNA-dependent RNA polymerase catalyzes the transcription of DNA into RNA using the four ribonucleoside triphosphates as substrates. The protein is DNA-directed RNA polymerase subunit beta of Lactococcus lactis subsp. cremoris (strain MG1363).